The primary structure comprises 217 residues: Serine acetyltransferase (217 aa).

The protein belongs to the transferase hexapeptide repeat family.

The protein resides in the cytoplasm. The enzyme catalyses L-serine + acetyl-CoA = O-acetyl-L-serine + CoA. It functions in the pathway amino-acid biosynthesis; L-cysteine biosynthesis; L-cysteine from L-serine: step 1/2. Inhibited by cysteine. In terms of biological role, catalyzes the acetylation of serine by acetyl-CoA to produce O-acetylserine (OAS). This chain is Serine acetyltransferase (cysE), found in Bacillus subtilis (strain 168).